Reading from the N-terminus, the 322-residue chain is Ribosomal RNA large subunit methyltransferase F (322 aa).

This sequence belongs to the methyltransferase superfamily. METTL16/RlmF family.

Its subcellular location is the cytoplasm. It catalyses the reaction adenosine(1618) in 23S rRNA + S-adenosyl-L-methionine = N(6)-methyladenosine(1618) in 23S rRNA + S-adenosyl-L-homocysteine + H(+). In terms of biological role, specifically methylates the adenine in position 1618 of 23S rRNA. This Cytophaga hutchinsonii (strain ATCC 33406 / DSM 1761 / CIP 103989 / NBRC 15051 / NCIMB 9469 / D465) protein is Ribosomal RNA large subunit methyltransferase F.